The sequence spans 380 residues: Flap endonuclease 1 (380 aa).

Residues 1-104 (MGIQGLAKLI…GELAKRSERR (104 aa)) form an N-domain region. The residue at position 19 (R19) is a Symmetric dimethylarginine; by PRMT5. D34 is a Mg(2+) binding site. Residues R47 and R70 each coordinate DNA. K80 is subject to N6-acetyllysine. Residue D86 coordinates Mg(2+). Symmetric dimethylarginine; by PRMT5 is present on residues R100 and R104. Positions 122–253 (EVEKFTKRLV…KRAVDLIQKH (132 aa)) are I-domain. Mg(2+)-binding residues include E158, E160, D179, and D181. E158 contributes to the DNA binding site. At S187 the chain carries Phosphoserine; by CDK2. Position 192 is a symmetric dimethylarginine; by PRMT5 (R192). The residue at position 197 (S197) is a Phosphoserine. DNA-binding residues include G231 and D233. D233 is a Mg(2+) binding site. S255, S293, and S335 each carry phosphoserine. At T336 the chain carries Phosphothreonine. An interaction with PCNA region spans residues 336–344 (TQGRLDDFF). A disordered region spans residues 349–380 (SLSSAKRKEPEPKGAAKKKQRLGPAGKFKRGK). An N6-acetyllysine mark is found at K354, K375, K377, and K380. Residues 363-380 (AAKKKQRLGPAGKFKRGK) show a composition bias toward basic residues.

It belongs to the XPG/RAD2 endonuclease family. FEN1 subfamily. Interacts with PCNA. Three molecules of FEN1 bind to one PCNA trimer with each molecule binding to one PCNA monomer. PCNA stimulates the nuclease activity without altering cleavage specificity. The C-terminal domain binds EP300; can bind simultaneously to both PCNA and EP300. Interacts with DDX11; this interaction is direct and increases flap endonuclease activity of FEN1. Interacts with WDR4; regulating its endonuclease activity. Interacts with POLB. Mg(2+) is required as a cofactor. Acetylated by EP300. Acetylation inhibits both endonuclease and exonuclease activity. Acetylation also reduces DNA-binding activity but does not affect interaction with PCNA or EP300. In terms of processing, phosphorylation upon DNA damage induces relocalization to the nuclear plasma. Phosphorylation at Ser-187 by CDK2 occurs during late S-phase and results in dissociation from PCNA. Post-translationally, methylation at Arg-192 by PRMT5 impedes Ser-187 phosphorylation and increases interaction with PCNA.

It is found in the nucleus. Its subcellular location is the nucleolus. The protein resides in the nucleoplasm. The protein localises to the mitochondrion. Functionally, structure-specific nuclease with 5'-flap endonuclease and 5'-3' exonuclease activities involved in DNA replication and repair. During DNA replication, cleaves the 5'-overhanging flap structure that is generated by displacement synthesis when DNA polymerase encounters the 5'-end of a downstream Okazaki fragment. It enters the flap from the 5'-end and then tracks to cleave the flap base, leaving a nick for ligation. Also involved in the long patch base excision repair (LP-BER) pathway, by cleaving within the apurinic/apyrimidinic (AP) site-terminated flap. Acts as a genome stabilization factor that prevents flaps from equilibrating into structures that lead to duplications and deletions. Also possesses 5'-3' exonuclease activity on nicked or gapped double-stranded DNA, and exhibits RNase H activity. Also involved in replication and repair of rDNA and in repairing mitochondrial DNA. This chain is Flap endonuclease 1, found in Ovis aries (Sheep).